A 157-amino-acid chain; its full sequence is uncharacterized protein (157 aa).

The region spanning 9–146 (LLINYKTLDE…GDFYVWHPET (138 aa)) is the N-acetyltransferase domain.

This is an uncharacterized protein from Bacillus cereus (strain AH187).